Reading from the N-terminus, the 119-residue chain is Large ribosomal subunit protein bL20 (119 aa).

Belongs to the bacterial ribosomal protein bL20 family.

Its function is as follows. Binds directly to 23S ribosomal RNA and is necessary for the in vitro assembly process of the 50S ribosomal subunit. It is not involved in the protein synthesizing functions of that subunit. The polypeptide is Large ribosomal subunit protein bL20 (Erythrobacter litoralis (strain HTCC2594)).